The following is a 172-amino-acid chain: Large ribosomal subunit protein bL9 (172 aa).

Belongs to the bacterial ribosomal protein bL9 family.

Its function is as follows. Binds to the 23S rRNA. This chain is Large ribosomal subunit protein bL9, found in Chlamydia caviae (strain ATCC VR-813 / DSM 19441 / 03DC25 / GPIC) (Chlamydophila caviae).